Here is a 423-residue protein sequence, read N- to C-terminus: COP9 signalosome complex subunit 3 (423 aa).

A2 carries the post-translational modification N-acetylalanine. Positions 197–365 (NFERALYFYE…GMVSFHDNPE (169 aa)) constitute a PCI domain. The interval 402 to 423 (QFVQKSMGSQEDDSGNKPSSYS) is disordered. 3 positions are modified to phosphoserine: S407, S410, and S423.

This sequence belongs to the CSN3 family. As to quaternary structure, component of the CSN complex, composed of COPS1/GPS1, COPS2, COPS3, COPS4, COPS5, COPS6, COPS7 (COPS7A or COPS7B), COPS8 and COPS9. In the complex, it probably interacts directly with COPS1, COPS4, COPS8 and COPS9. Interacts with CK2 and PKD. Interacts with the translation initiation factor EIF3S6 and IKBKG. Interacts with ERCC6. Widely expressed.

It localises to the cytoplasm. It is found in the nucleus. Component of the COP9 signalosome complex (CSN), a complex involved in various cellular and developmental processes. The CSN complex is an essential regulator of the ubiquitin (Ubl) conjugation pathway by mediating the deneddylation of the cullin subunits of SCF-type E3 ligase complexes, leading to decrease the Ubl ligase activity of SCF-type complexes such as SCF, CSA or DDB2. The complex is also involved in phosphorylation of p53/TP53, c-jun/JUN, IkappaBalpha/NFKBIA, ITPK1 and IRF8/ICSBP, possibly via its association with CK2 and PKD kinases. CSN-dependent phosphorylation of TP53 and JUN promotes and protects degradation by the Ubl system, respectively. Essential to maintain the survival of epiblast cells and thus the development of the postimplantation embryo. The protein is COP9 signalosome complex subunit 3 (Cops3) of Mus musculus (Mouse).